We begin with the raw amino-acid sequence, 122 residues long: uncharacterized protein (122 aa).

The next 3 helical transmembrane spans lie at 21–40, 57–77, and 94–114; these read VWSW…SIAI, YTHM…CICI, and LLFS…YCIY.

The protein resides in the membrane. This is an uncharacterized protein from Saccharomyces cerevisiae (strain ATCC 204508 / S288c) (Baker's yeast).